The sequence spans 231 residues: Monothiol glutaredoxin-6 (231 aa).

An N-terminal signal peptide occupies residues 1–29 (MIPSNKRNARILSITTLLLLLVFFVAQNA). One can recognise a Glutaredoxin domain in the interval 116-219 (QKEYSLILDL…ESLQVWSDGK (104 aa)). C136 provides a ligand contact to [2Fe-2S] cluster.

It belongs to the glutaredoxin family. Monothiol subfamily.

Its subcellular location is the vacuole. The sequence is that of Monothiol glutaredoxin-6 (GRX6) from Saccharomyces cerevisiae (strain ATCC 204508 / S288c) (Baker's yeast).